Here is a 156-residue protein sequence, read N- to C-terminus: Transcription elongation factor GreA (156 aa).

Residues 6–75 (IYLTKEGYEK…ELENMLSKAE (70 aa)) adopt a coiled-coil conformation.

This sequence belongs to the GreA/GreB family.

Necessary for efficient RNA polymerase transcription elongation past template-encoded arresting sites. The arresting sites in DNA have the property of trapping a certain fraction of elongating RNA polymerases that pass through, resulting in locked ternary complexes. Cleavage of the nascent transcript by cleavage factors such as GreA or GreB allows the resumption of elongation from the new 3'terminus. GreA releases sequences of 2 to 3 nucleotides. The polypeptide is Transcription elongation factor GreA (Thermosipho africanus (strain TCF52B)).